We begin with the raw amino-acid sequence, 269 residues long: Phosphatidate cytidylyltransferase (269 aa).

The next 8 helical transmembrane spans lie at 13–33, 50–70, 81–101, 110–130, 138–158, 180–200, 201–221, and 247–267; these read LAAIVFLFLVIVGKLPFTILI, LKLVSLPGLIGLLLLWMFLLP, ISKMEIALFAVLLLLTYTVLV, VGFITLAAIYIGMCFHYFIEI, LTYIFYACVVIWSTDSGAYFV, FAGGIVIALVLATIFQLVAQL, PIPYIYLLLITLFLSVFGQLG, and ILDRFDSFLFVMPFLYFLLAL.

Belongs to the CDS family.

It localises to the cell membrane. The enzyme catalyses a 1,2-diacyl-sn-glycero-3-phosphate + CTP + H(+) = a CDP-1,2-diacyl-sn-glycerol + diphosphate. The protein operates within phospholipid metabolism; CDP-diacylglycerol biosynthesis; CDP-diacylglycerol from sn-glycerol 3-phosphate: step 3/3. In Bacillus subtilis (strain 168), this protein is Phosphatidate cytidylyltransferase (cdsA).